Here is a 351-residue protein sequence, read N- to C-terminus: Histidinol-phosphate aminotransferase (351 aa).

Position 215 is an N6-(pyridoxal phosphate)lysine (Lys-215).

The protein belongs to the class-II pyridoxal-phosphate-dependent aminotransferase family. Histidinol-phosphate aminotransferase subfamily. It depends on pyridoxal 5'-phosphate as a cofactor.

The enzyme catalyses L-histidinol phosphate + 2-oxoglutarate = 3-(imidazol-4-yl)-2-oxopropyl phosphate + L-glutamate. The protein operates within amino-acid biosynthesis; L-histidine biosynthesis; L-histidine from 5-phospho-alpha-D-ribose 1-diphosphate: step 7/9. The polypeptide is Histidinol-phosphate aminotransferase (Methanocorpusculum labreanum (strain ATCC 43576 / DSM 4855 / Z)).